Reading from the N-terminus, the 160-residue chain is Phosphopantetheine adenylyltransferase (160 aa).

Threonine 10 contributes to the substrate binding site. ATP is bound by residues 10-11 (TF) and histidine 18. Substrate contacts are provided by lysine 42, leucine 74, and arginine 88. Residues 89–91 (GLR), glutamate 99, and 124–130 (HGFLSST) each bind ATP.

This sequence belongs to the bacterial CoaD family. In terms of assembly, homohexamer. Mg(2+) is required as a cofactor.

It is found in the cytoplasm. It carries out the reaction (R)-4'-phosphopantetheine + ATP + H(+) = 3'-dephospho-CoA + diphosphate. It functions in the pathway cofactor biosynthesis; coenzyme A biosynthesis; CoA from (R)-pantothenate: step 4/5. Functionally, reversibly transfers an adenylyl group from ATP to 4'-phosphopantetheine, yielding dephospho-CoA (dPCoA) and pyrophosphate. This chain is Phosphopantetheine adenylyltransferase, found in Aliivibrio fischeri (strain MJ11) (Vibrio fischeri).